The chain runs to 111 residues: Universal stress protein B (111 aa).

Transmembrane regions (helical) follow at residues 1-21 (MISTVALFWALCVVCVVNMAR) and 90-110 (FILTSALCGLVVVSLVALMLW).

This sequence belongs to the universal stress protein B family.

The protein resides in the cell inner membrane. This chain is Universal stress protein B, found in Yersinia pseudotuberculosis serotype O:1b (strain IP 31758).